A 118-amino-acid polypeptide reads, in one-letter code: Ribosome-binding factor A (118 aa).

It belongs to the RbfA family. In terms of assembly, monomer. Binds 30S ribosomal subunits, but not 50S ribosomal subunits or 70S ribosomes.

It localises to the cytoplasm. Its function is as follows. One of several proteins that assist in the late maturation steps of the functional core of the 30S ribosomal subunit. Associates with free 30S ribosomal subunits (but not with 30S subunits that are part of 70S ribosomes or polysomes). Required for efficient processing of 16S rRNA. May interact with the 5'-terminal helix region of 16S rRNA. This chain is Ribosome-binding factor A, found in Bacillus cereus (strain B4264).